The sequence spans 568 residues: Oxygen-dependent choline dehydrogenase (568 aa).

8-37 is an FAD binding site; sequence DYIIIGAGSAGNTLAARLTEDAGVTVLLLE. His-477 acts as the Proton acceptor in catalysis.

This sequence belongs to the GMC oxidoreductase family. FAD is required as a cofactor.

The catalysed reaction is choline + A = betaine aldehyde + AH2. It catalyses the reaction betaine aldehyde + NAD(+) + H2O = glycine betaine + NADH + 2 H(+). The protein operates within amine and polyamine biosynthesis; betaine biosynthesis via choline pathway; betaine aldehyde from choline (cytochrome c reductase route): step 1/1. Involved in the biosynthesis of the osmoprotectant glycine betaine. Catalyzes the oxidation of choline to betaine aldehyde and betaine aldehyde to glycine betaine at the same rate. The polypeptide is Oxygen-dependent choline dehydrogenase (Pseudomonas syringae pv. syringae (strain B728a)).